We begin with the raw amino-acid sequence, 290 residues long: MSRLGNRADWADDEEFDDPSALPPQQVTTNKDGTKTVVSYRFNDEGKKVKVTRRIKTTVVREHVNPQVAERRSWAKFGLEKGHAAGPSFDTTSVGENIVFRPSVNWRAQAAEAEKAGGEKGSIKDQLKDKKVKCRICSGEHFTARCPFKDTMAPVDESTGAAGGEPGAEDEAAAGGLGAGTSSYVPPHMRKGAASGGERMAGKYEKDDLATLRVTNVSELAEESEIRDLFERFGRVTRVFLARDRETQRAKGFAFISFADRSDAARACEKMDGFGYRHLILRVEFAKRAT.

2 disordered regions span residues M1–K35 and E157–M200. One can recognise an RRM domain in the interval A210–R288.

It belongs to the eIF-3 subunit G family. Component of the eukaryotic translation initiation factor 3 (eIF-3) complex.

It localises to the cytoplasm. In terms of biological role, RNA-binding component of the eukaryotic translation initiation factor 3 (eIF-3) complex, which is involved in protein synthesis of a specialized repertoire of mRNAs and, together with other initiation factors, stimulates binding of mRNA and methionyl-tRNAi to the 40S ribosome. The eIF-3 complex specifically targets and initiates translation of a subset of mRNAs involved in cell proliferation. This subunit can bind 18S rRNA. The protein is Eukaryotic translation initiation factor 3 subunit G (tif35) of Aspergillus clavatus (strain ATCC 1007 / CBS 513.65 / DSM 816 / NCTC 3887 / NRRL 1 / QM 1276 / 107).